Here is a 396-residue protein sequence, read N- to C-terminus: MSNDFLFTSESVSEGHPDKVADQISDAILDAILAQDKYARVAAETLCNTGLVVLAGEITTSANVDYIHVARETIKRIGYDNTDYGIDYKGCAVLVAYDKQSPDIAQGVDRASDDYLNQGAGDQGLMFGYACDETPELMPFPIYYAHRLVERQSQLRRDGRLPWLRPDAKSQVTVRYVNGKPHSVDTVVLSTQHAPEISQEQIREAVIEEIIKPVLPSHMLAETKYLVNPTGRFVIGGPQGDCGLTGRKIIVDTYGGAAPHGGGAFSGKDPSKVDRSAAYAARYVAKNVVAAGLARQCQVQVSYAIGVARPINITVYTEGTGVIPDEQIAKLVQEHFDLRPKGIVQMLDLLRPIYGKTAAYGHFGREEPEFSWEATDKAQLLREAAGLAGEPVKAFA.

Residue H16 coordinates ATP. D18 serves as a coordination point for Mg(2+). A K(+)-binding site is contributed by E44. Positions 57 and 100 each coordinate L-methionine. The interval 100–110 (QSPDIAQGVDR) is flexible loop. Residues 167–169 (DAK), 232–233 (RF), D241, 247–248 (RK), A264, and K268 contribute to the ATP site. D241 contributes to the L-methionine binding site. K272 is an L-methionine binding site.

Belongs to the AdoMet synthase family. As to quaternary structure, homotetramer; dimer of dimers. It depends on Mg(2+) as a cofactor. K(+) is required as a cofactor.

It localises to the cytoplasm. The enzyme catalyses L-methionine + ATP + H2O = S-adenosyl-L-methionine + phosphate + diphosphate. It participates in amino-acid biosynthesis; S-adenosyl-L-methionine biosynthesis; S-adenosyl-L-methionine from L-methionine: step 1/1. In terms of biological role, catalyzes the formation of S-adenosylmethionine (AdoMet) from methionine and ATP. The overall synthetic reaction is composed of two sequential steps, AdoMet formation and the subsequent tripolyphosphate hydrolysis which occurs prior to release of AdoMet from the enzyme. This chain is S-adenosylmethionine synthase, found in Ralstonia nicotianae (strain ATCC BAA-1114 / GMI1000) (Ralstonia solanacearum).